A 125-amino-acid chain; its full sequence is Oxytocin-neurophysin 1 (125 aa).

The signal sequence occupies residues 1 to 19 (MAGPSLACCLLGLLALTSA). Residues Cys20 and Cys25 are joined by a disulfide bond. Gly28 carries the glycine amide modification. Disulfide bonds link Cys41–Cys85, Cys44–Cys58, Cys52–Cys75, Cys59–Cys65, Cys92–Cys104, Cys98–Cys116, and Cys105–Cys110.

Belongs to the vasopressin/oxytocin family. As to quaternary structure, interacts with oxytocin receptor (Ki=1.5 nM). Interacts with vasopressin V1aR/AVPR1A (Ki=37 nM), V1bR/AVPR1B (Ki=222 nM), and V2R/AVPR2 receptors (Ki=823 nM).

Its function is as follows. Neurophysin 1 specifically binds oxytocin. Functionally, oxytocin causes contraction of the smooth muscle of the uterus and of the mammary gland. Acts by binding to oxytocin receptor (OXTR). The sequence is that of Oxytocin-neurophysin 1 (OXT) from Sus scrofa (Pig).